We begin with the raw amino-acid sequence, 98 residues long: NADH-ubiquinone oxidoreductase chain 4L (98 aa).

Transmembrane regions (helical) follow at residues 2–22 (MMAV…TLMF), 26–46 (LMST…ITTI), and 59–79 (IPIV…ALLV).

Belongs to the complex I subunit 4L family. Core subunit of respiratory chain NADH dehydrogenase (Complex I) which is composed of 45 different subunits.

The protein resides in the mitochondrion inner membrane. The enzyme catalyses a ubiquinone + NADH + 5 H(+)(in) = a ubiquinol + NAD(+) + 4 H(+)(out). Core subunit of the mitochondrial membrane respiratory chain NADH dehydrogenase (Complex I) which catalyzes electron transfer from NADH through the respiratory chain, using ubiquinone as an electron acceptor. Part of the enzyme membrane arm which is embedded in the lipid bilayer and involved in proton translocation. The protein is NADH-ubiquinone oxidoreductase chain 4L (MT-ND4L) of Phodopus sungorus (Striped hairy-footed hamster).